Here is a 306-residue protein sequence, read N- to C-terminus: MSCRELIILGCSSQQPTRMRNQGAYLFRWNNEGLLFDPGEGTQRQFIFANIAPTVVSRIFISHFHGDHCLGLGSMLMRLNLDKVTHPIHCYYPASGKKYFDRLRYGTIYHETIHVVEHPVDKEGIVEDFGNFRIEARKLDHLVDTLGWRITEPDTIKFIPEKIKAAGLRGPIMQDLLRDDHVTVNGNTIYLKDVSYVRKGDSIAVIADTLPCQSVVDLAKDARIMLCESTYLEEHLHLAKSHYHMTAKQAATQALAAGAQQLVLTHFSARYLNSKEFELEAGKIFPNVAAAEEFRSYPFPKNPSSK.

7 residues coordinate Zn(2+): His-63, His-65, Asp-67, His-68, His-141, Asp-208, and His-266. Asp-67 serves as the catalytic Proton acceptor.

Belongs to the RNase Z family. In terms of assembly, homodimer. Zn(2+) serves as cofactor.

The enzyme catalyses Endonucleolytic cleavage of RNA, removing extra 3' nucleotides from tRNA precursor, generating 3' termini of tRNAs. A 3'-hydroxy group is left at the tRNA terminus and a 5'-phosphoryl group is left at the trailer molecule.. Zinc phosphodiesterase, which displays some tRNA 3'-processing endonuclease activity. Probably involved in tRNA maturation, by removing a 3'-trailer from precursor tRNA. This is Ribonuclease Z from Chlamydia caviae (strain ATCC VR-813 / DSM 19441 / 03DC25 / GPIC) (Chlamydophila caviae).